Here is a 75-residue protein sequence, read N- to C-terminus: Conotoxin VnMSGL-0111 (75 aa).

Positions 1-20 are cleaved as a signal peptide; the sequence is MSGLEIMVLTLLLLVSMATS. A propeptide spanning residues 21–44 is cleaved from the precursor; the sequence is HQDGGEKQATQRDAINVRRRSITR. Disulfide bonds link C48–C60, C52–C69, and C59–C73.

The protein belongs to the conotoxin O3 superfamily. As to expression, expressed by the venom duct.

It is found in the secreted. In Conus ventricosus (Mediterranean cone), this protein is Conotoxin VnMSGL-0111.